The sequence spans 324 residues: Aldo-keto reductase family 1 member A1 (324 aa).

Serine 3 carries the post-translational modification Phosphoserine. NADP(+)-binding positions include 10–19 (GQKMPLIGLG), threonine 20, and tryptophan 21. Residue serine 37 is modified to Phosphoserine. Aspartate 44 serves as a coordination point for NADP(+). Tyrosine 49 serves as the catalytic Proton donor. Lysine 126 is modified (N6-acetyllysine; alternate). Residue lysine 126 is modified to N6-succinyllysine; alternate. The residue at position 144 (lysine 144) is an N6-succinyllysine. Residues serine 161, asparagine 162, serine 210, leucine 212, serine 214, serine 215, lysine 262, serine 263, isoleucine 264, threonine 265, arginine 268, glutamine 271, and asparagine 272 each contribute to the NADP(+) site. Serine 210 is modified (phosphoserine).

It belongs to the aldo/keto reductase family.

The protein localises to the cytoplasm. It is found in the cytosol. Its subcellular location is the apical cell membrane. The enzyme catalyses a primary alcohol + NADP(+) = an aldehyde + NADPH + H(+). It catalyses the reaction L-gulonate + NADP(+) = aldehydo-D-glucuronate + NADPH + H(+). The catalysed reaction is L-gulono-1,4-lactone + NADP(+) = D-glucurono-3,6-lactone + NADPH + H(+). It carries out the reaction allyl alcohol + NADP(+) = acrolein + NADPH + H(+). The enzyme catalyses glycerol + NADP(+) = D-glyceraldehyde + NADPH + H(+). It catalyses the reaction glycerol + NADP(+) = L-glyceraldehyde + NADPH + H(+). The catalysed reaction is hydroxyacetone + NADP(+) = methylglyoxal + NADPH + H(+). It carries out the reaction 3-deoxyfructose + NADP(+) = 3-deoxyglucosone + NADPH + H(+). The enzyme catalyses (R)-mevalonate + NADP(+) = (R)-mevaldate + NADPH + H(+). It catalyses the reaction S-nitroso-CoA + NADPH + H(+) = sulfinamide-CoA + NADP(+). The catalysed reaction is S-nitrosoglutathione + NADPH + H(+) = S-(hydroxysulfenamide)glutathione + NADP(+). Its function is as follows. Catalyzes the NADPH-dependent reduction of a wide variety of carbonyl-containing compounds to their corresponding alcohols. Displays enzymatic activity towards endogenous metabolites such as aromatic and aliphatic aldehydes, ketones, monosaccharides and bile acids, with a preference for negatively charged substrates, such as glucuronate and succinic semialdehyde. Plays an important role by catalyzing the reduction of D-glucuronic acid and D-glucurono-gamma-lactone. Functions as a detoxifiying enzyme by reducing a range of toxic aldehydes. Reduces methylglyoxal and 3-deoxyglucosone, which are present at elevated levels under hyperglycemic conditions and are cytotoxic. Involved also in the detoxification of lipid-derived aldehydes like acrolein. Plays a role in the activation of procarcinogens, such as polycyclic aromatic hydrocarbon trans-dihydrodiols, and in the metabolism of various xenobiotics and drugs. Also acts as an inhibitor of protein S-nitrosylation by mediating degradation of S-nitroso-coenzyme A (S-nitroso-CoA), a cofactor required to S-nitrosylate proteins. S-nitroso-CoA reductase activity is involved in reprogramming intermediary metabolism in renal proximal tubules, notably by inhibiting protein S-nitrosylation of isoform 2 of PKM (PKM2). Also acts as a S-nitroso-glutathione reductase by catalyzing the NADPH-dependent reduction of S-nitrosoglutathione. Displays no reductase activity towards retinoids. This Cricetulus griseus (Chinese hamster) protein is Aldo-keto reductase family 1 member A1 (AKR1A1).